The sequence spans 1091 residues: LRR receptor-like serine/threonine-protein kinase RGI3 (1091 aa).

The first 24 residues, 1–24 (MPPNIYRLSFFSSLLCFFFIPCFS), serve as a signal peptide directing secretion. Topologically, residues 25-703 (LDQQGQALLS…TTRNSSVVRL (679 aa)) are extracellular. Residues 33–56 (LSWKSQLNISGDAFSSWHVADTSP) form an LRR 1 repeat. A glycan (N-linked (GlcNAc...) asparagine) is linked at Asn40. Cys57 and Cys64 are oxidised to a cystine. LRR repeat units follow at residues 67 to 91 (RGEVSEIQLKGMDLQGSLPVTSLRS), 92 to 115 (LKSLTSLTLSSLNLTGVIPKEIGD), 116 to 140 (FTELELLDLSDNSLSGDIPVEIFRL), 142 to 166 (KLKTLSLNTNNLEGHIPMEIGNLSG), 168 to 188 (VELMLFDNKLSGEIPRSIGEL), 190 to 213 (NLQVLRAGGNKNLRGELPWEIGNC), 214 to 237 (ENLVMLGLAETSLSGKLPASIGNL), 239 to 261 (RVQTIAIYTSLLSGPIPDEIGYC), 262 to 285 (TELQNLYLYQNSISGSIPTTIGGL), 287 to 309 (KLQSLLLWQNNLVGKIPTELGNC), 311 to 332 (ELWLIDFSENLLTGTIPRSFGK), 333 to 357 (LENLQELQLSVNQISGTIPEELTNC), 359 to 383 (KLTHLEIDNNLITGEIPSLMSNLRS), 385 to 405 (TMFFAWQNKLTGNIPQSLSQC), 406 to 429 (RELQAIDLSYNSLSGSIPKEIFGL), 431 to 453 (NLTKLLLLSNDLSGFIPPDIGNC), 454 to 477 (TNLYRLRLNGNRLAGSIPSEIGNL), 478 to 501 (KNLNFVDISENRLVGSIPPAISGC), 503 to 524 (SLEFLDLHTNSLSGSLLGTTLP), 525 to 548 (KSLKFIDFSDNALSSTLPPGIGLL), 549 to 572 (TELTKLNLAKNRLSGEIPREISTC), 574 to 596 (SLQLLNLGENDFSGEIPDELGQI), 598 to 620 (SLAISLNLSCNRFVGEIPSRFSD), 621 to 644 (LKNLGVLDVSHNQLTGNLNVLTDL), 645 to 668 (QNLVSLNISYNDFSGDLPNTPFFR), and 669 to 690 (RLPLSDLASNRGLYISNAISTR). A glycan (N-linked (GlcNAc...) asparagine) is linked at Asn104. A glycan (N-linked (GlcNAc...) asparagine) is linked at Asn163. Short sequence motifs (small peptide recognition) lie at residues 173–174 (FD), 195–198 (RAGG), 218–223 (MLGLAE), Tyr246, and 268–270 (YLY). 2 consecutive short sequence motifs (small peptide recognition) follow at residues 316-319 (DFSE) and 338-340 (ELQ). Asn356 is a glycosylation site (N-linked (GlcNAc...) asparagine). Short sequence motifs (small peptide recognition) lie at residues 386-390 (MFFAW) and 412-415 (DLSY). A glycan (N-linked (GlcNAc...) asparagine) is linked at Asn431. The Small peptide recognition motif lies at 434–438 (KLLLL). Residue Asn452 is glycosylated (N-linked (GlcNAc...) asparagine). The Small peptide recognition signature appears at 458–460 (RLR). Asn604 carries an N-linked (GlcNAc...) asparagine glycan. Asn651 carries an N-linked (GlcNAc...) asparagine glycan. Asn697 carries an N-linked (GlcNAc...) asparagine glycan. The helical transmembrane segment at 704 to 724 (TILILVVVTAVLVLMAVYTLV) threads the bilayer. The Cytoplasmic portion of the chain corresponds to 725 to 1091 (RARAAGKQLL…CSFAFSDDSV (367 aa)). The region spanning 760 to 1046 (LTSANVIGTG…MLTEIRHIDV (287 aa)) is the Protein kinase domain. Residues 766–774 (IGTGSSGVV) and Lys788 contribute to the ATP site. Residues Tyr831 and Tyr870 each carry the phosphotyrosine modification. The active-site Proton acceptor is the Asp883. Tyr933 is subject to Phosphotyrosine.

This sequence belongs to the protein kinase superfamily. Ser/Thr protein kinase family. As to quaternary structure, binds to RGF peptides such as RGF1, GLV5/CLEL1/RGF2, GLV7/CLEL3/RGF3, GLV3/RGF4, GLV10/CLEL7/RGF5 and RGF10/CLELN; these interactions trigger the formation of heterodimers with SERK1, SERK2 or BAK1/SERK3 via LRR regions. Post-translationally, phosphorylated and ubiquitinated upon interaction with RGF1, thus leading to activation a subsequent degradation. In terms of processing, autophosphorylated. Expressed in roots.

The protein localises to the cell membrane. It catalyses the reaction L-seryl-[protein] + ATP = O-phospho-L-seryl-[protein] + ADP + H(+). The catalysed reaction is L-threonyl-[protein] + ATP = O-phospho-L-threonyl-[protein] + ADP + H(+). In terms of biological role, together with RGI1, RGI2, RGI4 and RGI5, acts as a receptor of RGF peptides (e.g. RGF1, GLV5/CLEL1/RGF2, GLV7/CLEL3/RGF3, GLV3/RGF4, GLV10/CLEL7/RGF5 and RGF10/CLELN), peptide hormones which maintain the postembryonic root stem cell niche by regulating the expression levels and patterns of the transcription factor PLETHORA (PLT, e.g. PLT1 and PLT2). Links RGF peptides signal with their downstream components. This Arabidopsis thaliana (Mouse-ear cress) protein is LRR receptor-like serine/threonine-protein kinase RGI3.